The sequence spans 265 residues: Putative carbamate hydrolase RutD (265 aa).

Residues 21-123 (PILLSAGMGG…TIVNGWARAD (103 aa)) enclose the AB hydrolase-1 domain.

Belongs to the AB hydrolase superfamily. Hydrolase RutD family.

The catalysed reaction is carbamate + 2 H(+) = NH4(+) + CO2. Functionally, involved in pyrimidine catabolism. May facilitate the hydrolysis of carbamate, a reaction that can also occur spontaneously. The sequence is that of Putative carbamate hydrolase RutD from Azorhizobium caulinodans (strain ATCC 43989 / DSM 5975 / JCM 20966 / LMG 6465 / NBRC 14845 / NCIMB 13405 / ORS 571).